Here is a 415-residue protein sequence, read N- to C-terminus: Lipoyl synthase, apicoplast (415 aa).

The signal sequence occupies residues 1–23; it reads MHFGIPSLFYLYILFSIIMRIKC. Residues cysteine 153, cysteine 158, cysteine 164, cysteine 179, cysteine 183, cysteine 186, and serine 394 each contribute to the [4Fe-4S] cluster site. Residues 165–383 enclose the Radical SAM core domain; it reads WNIGTATIML…KEEGLKMGFK (219 aa).

Belongs to the radical SAM superfamily. Lipoyl synthase family. The cofactor is [4Fe-4S] cluster.

It is found in the plastid. It localises to the apicoplast. It catalyses the reaction [[Fe-S] cluster scaffold protein carrying a second [4Fe-4S](2+) cluster] + N(6)-octanoyl-L-lysyl-[protein] + 2 oxidized [2Fe-2S]-[ferredoxin] + 2 S-adenosyl-L-methionine + 4 H(+) = [[Fe-S] cluster scaffold protein] + N(6)-[(R)-dihydrolipoyl]-L-lysyl-[protein] + 4 Fe(3+) + 2 hydrogen sulfide + 2 5'-deoxyadenosine + 2 L-methionine + 2 reduced [2Fe-2S]-[ferredoxin]. Its pathway is protein modification; protein lipoylation via endogenous pathway; protein N(6)-(lipoyl)lysine from octanoyl-[acyl-carrier-protein]: step 2/2. Its function is as follows. Catalyzes the radical-mediated insertion of two sulfur atoms into the C-6 and C-8 positions of the octanoyl moiety bound to the lipoyl domains of lipoate-dependent enzymes, thereby converting the octanoylated domains into lipoylated derivatives. The sequence is that of Lipoyl synthase, apicoplast from Plasmodium falciparum (isolate 3D7).